The chain runs to 264 residues: Thymidylate synthase (264 aa).

Arg21 provides a ligand contact to dUMP. A (6R)-5,10-methylene-5,6,7,8-tetrahydrofolate-binding site is contributed by His51. Position 126-127 (126-127) interacts with dUMP; sequence RR. Residue Cys146 is the Nucleophile of the active site. DUMP-binding positions include 166–169, Asn177, and 207–209; these read RSCD and HLY. Asp169 is a (6R)-5,10-methylene-5,6,7,8-tetrahydrofolate binding site. Ala263 is a binding site for (6R)-5,10-methylene-5,6,7,8-tetrahydrofolate.

Belongs to the thymidylate synthase family. Bacterial-type ThyA subfamily. As to quaternary structure, homodimer.

The protein resides in the cytoplasm. The catalysed reaction is dUMP + (6R)-5,10-methylene-5,6,7,8-tetrahydrofolate = 7,8-dihydrofolate + dTMP. It participates in pyrimidine metabolism; dTTP biosynthesis. Catalyzes the reductive methylation of 2'-deoxyuridine-5'-monophosphate (dUMP) to 2'-deoxythymidine-5'-monophosphate (dTMP) while utilizing 5,10-methylenetetrahydrofolate (mTHF) as the methyl donor and reductant in the reaction, yielding dihydrofolate (DHF) as a by-product. This enzymatic reaction provides an intracellular de novo source of dTMP, an essential precursor for DNA biosynthesis. This chain is Thymidylate synthase, found in Enterobacter sp. (strain 638).